A 343-amino-acid chain; its full sequence is MPKICILGSGSWGTAQALLLSSKEFQVILWGRIEDGVDSLQQDRENRRFLPGIRLSDTIVATSDLARALKGADIVVMAVPSQSLREVLEKARPYLGKDSCLVNTAKGLEISSGMRMSQVVEDVLGKQSRERYAVLSGPSHAEEVARNIPTAITVASYHKENAFLVQDLYMTPFFRVYTNPDVAGVELGGALKNIIALGTGIASGLGYGDNTQAALLTRGLHEIIRMGEAMGGEARTFSGLSGIGDLVVTCSSRHSRNRQAGILIGQGYSLEETLKQIAMVVEGAHTIRVVHRLACQLRIDMPICTACYNVLYANRKARDEVDDLMRRQKKHEIEEIVKRKKGW.

Residues serine 11, tryptophan 12, arginine 32, and lysine 106 each contribute to the NADPH site. Sn-glycerol 3-phosphate is bound by residues lysine 106, glycine 137, and serine 139. Alanine 141 is a binding site for NADPH. Residues lysine 192, aspartate 245, serine 255, arginine 256, and asparagine 257 each contribute to the sn-glycerol 3-phosphate site. The active-site Proton acceptor is lysine 192. Arginine 256 lines the NADPH pocket. NADPH contacts are provided by valine 280 and glutamate 282.

The protein belongs to the NAD-dependent glycerol-3-phosphate dehydrogenase family.

Its subcellular location is the cytoplasm. The catalysed reaction is sn-glycerol 3-phosphate + NAD(+) = dihydroxyacetone phosphate + NADH + H(+). It catalyses the reaction sn-glycerol 3-phosphate + NADP(+) = dihydroxyacetone phosphate + NADPH + H(+). It participates in membrane lipid metabolism; glycerophospholipid metabolism. Its function is as follows. Catalyzes the reduction of the glycolytic intermediate dihydroxyacetone phosphate (DHAP) to sn-glycerol 3-phosphate (G3P), the key precursor for phospholipid synthesis. The protein is Glycerol-3-phosphate dehydrogenase [NAD(P)+] of Syntrophomonas wolfei subsp. wolfei (strain DSM 2245B / Goettingen).